We begin with the raw amino-acid sequence, 310 residues long: tRNA-cytidine(32) 2-sulfurtransferase (310 aa).

Positions 45–50 match the PP-loop motif motif; that stretch reads SGGKDS. [4Fe-4S] cluster contacts are provided by cysteine 120, cysteine 123, and cysteine 211.

This sequence belongs to the TtcA family. As to quaternary structure, homodimer. The cofactor is Mg(2+). [4Fe-4S] cluster is required as a cofactor.

The protein localises to the cytoplasm. The catalysed reaction is cytidine(32) in tRNA + S-sulfanyl-L-cysteinyl-[cysteine desulfurase] + AH2 + ATP = 2-thiocytidine(32) in tRNA + L-cysteinyl-[cysteine desulfurase] + A + AMP + diphosphate + H(+). The protein operates within tRNA modification. Functionally, catalyzes the ATP-dependent 2-thiolation of cytidine in position 32 of tRNA, to form 2-thiocytidine (s(2)C32). The sulfur atoms are provided by the cysteine/cysteine desulfurase (IscS) system. The polypeptide is tRNA-cytidine(32) 2-sulfurtransferase (Shewanella baltica (strain OS195)).